Reading from the N-terminus, the 343-residue chain is D-beta-hydroxybutyrate dehydrogenase, mitochondrial (343 aa).

A mitochondrion-targeting transit peptide spans 1–46; the sequence is MLAARLSRPLSQLPGKALSVCDRENGTRHTLLFYPASFSPDTRRTY. 59 to 83 is an NAD(+) binding site; the sequence is LVTGCDSGFGFSLAKHLHSKGFLVF. Residue Lys73 is modified to N6-acetyllysine. Lys103 carries the N6-acetyllysine; alternate modification. Lys103 is modified (N6-succinyllysine; alternate). 2 positions are modified to N6-acetyllysine: Lys132 and Lys177. Ser195 is a binding site for substrate. The active-site Proton acceptor is the Tyr208. Residue Lys212 is modified to N6-acetyllysine. Ser219 is a glycosylation site (O-linked (GlcNAc) serine). Phosphoserine is present on Ser246. Lys258 is modified (N6-acetyllysine). Lys259 is modified (N6-acetyllysine; alternate). Position 259 is an N6-succinyllysine; alternate (Lys259). Position 280 is an N6-acetyllysine (Lys280).

Belongs to the short-chain dehydrogenases/reductases (SDR) family. Homotetramer. In terms of tissue distribution, expressed in liver.

The protein resides in the mitochondrion inner membrane. It localises to the mitochondrion matrix. It catalyses the reaction (R)-3-hydroxybutanoate + NAD(+) = acetoacetate + NADH + H(+). Its activity is regulated as follows. Requires phosphatidylcholine as an allosteric activator for enzymatic activity. This chain is D-beta-hydroxybutyrate dehydrogenase, mitochondrial, found in Rattus norvegicus (Rat).